Here is a 935-residue protein sequence, read N- to C-terminus: MLKTLFGDPNARKLKKFQPFVTEVNLLEEEIQKLSDEELKYKTVEFREALDKARNDEELEDILDEILPEAFAVVREAGIRVLGMRHFDVQLLGGIVLHKGQIAEMKTGEGKTLVATLPAYLNGLTGKGVHVVTVNDYLARRDAEWMGQVHRFLGLSVGLIQGGMNPEERKKNYGCDITYTTNSELGFDYLRDNMATAMAEVVQRPFNYCIIDEVDSILIDEARTPLIISGQVERPTEKYLQAAAIAAQLLKQESEDDPGDYEVDEKARNVLMTDAGFEKAEQLLNVQDLYDQDNPWAHYIFNAIKAKELFTKDVNYMIRNNEIVIVDEFTGRVLPGRRWSDGLHQAIEAKEGVEIQRETQTLATITYQNFFLLYPKLSGMTGTAKTEETELEKVYNLQVTIIPTNRISRRYDLPDVVYKTEDAKWQAVAGEVEELHHQGRPILVGTTSVEKSEVLSKLLQQKKIHHNLLNARPENVERESEIVAQAGRKGAVTIATNMAGRGTDIILGGNADYMARLKIREYLMPQIVMPEDDDLMAGVSGNGGRRPQGFGTSKKKGKNWSPSDADIFPTKMSQETEEILKEAVKFAVEQYGQQSLTELEAEEKIAIASENAPTDDSVVEKLRVVYKAIRKTYETVTDQEHDEVVELGGLHVIGTERHESRRIDNQLRGRAGRQGDPGSTKFFLSLEDNLLRIFGGDRVAGLMNAFRVEEDMPIESQMLTRSLEGAQKKVETFYYDTRKQVFEYDEVMNNQRRAIYAERRRVLEGLDLKEQVLQYAEKTMDEIVDAYVNPELPPEEWDIPNLVGKVKEFVYLLKDVTPQDMEDMTVSEMKIFLHEEVRKAYDIKEYEVDQIRPGLMREAERFFILQQIDTLWREHLQTMDALRESIGLRGYGQQDPLIEYKQEGYEMFLEMMIDIRRNVVYSLFQFQPQGQPQTV.

ATP is bound by residues Q90, 108 to 112 (GEGKT), and D504. A disordered region spans residues 543–568 (GGRRPQGFGTSKKKGKNWSPSDADIF).

It belongs to the SecA family. In terms of assembly, monomer and homodimer. Part of the essential Sec protein translocation apparatus which comprises SecA, SecYEG and auxiliary proteins SecDF. Other proteins may also be involved.

It localises to the cell inner membrane. The protein localises to the cellular thylakoid membrane. Its subcellular location is the cytoplasm. It catalyses the reaction ATP + H2O + cellular proteinSide 1 = ADP + phosphate + cellular proteinSide 2.. Functionally, part of the Sec protein translocase complex. Interacts with the SecYEG preprotein conducting channel. Has a central role in coupling the hydrolysis of ATP to the transfer of proteins into and across the cell membrane, serving as an ATP-driven molecular motor driving the stepwise translocation of polypeptide chains across the membrane. Probably participates in protein translocation into and across both the cytoplasmic and thylakoid membranes in cyanobacterial cells. In Rippkaea orientalis (strain PCC 8801 / RF-1) (Cyanothece sp. (strain PCC 8801)), this protein is Protein translocase subunit SecA.